Consider the following 1112-residue polypeptide: Phytochrome E (1112 aa).

The tract at residues 1 to 20 is disordered; the sequence is MGFESSSSAASNMKPQPQKS. The GAF domain maps to 217 to 387; it reads DIGALCDTVV…AFGLQLQMEL (171 aa). Cysteine 322 provides a ligand contact to phytochromobilin. PAS domains follow at residues 595 to 666 and 732 to 803; these read FVCE…LQGE and DYKT…LISL. Residues 877–1096 enclose the Histidine kinase domain; sequence YVRQEIKNPL…FFQVDLQVKT (220 aa).

Belongs to the phytochrome family. Homodimer. Post-translationally, contains one covalently linked phytochromobilin chromophore.

In terms of biological role, regulatory photoreceptor which exists in two forms that are reversibly interconvertible by light: the Pr form that absorbs maximally in the red region of the spectrum and the Pfr form that absorbs maximally in the far-red region. Photoconversion of Pr to Pfr induces an array of morphogenic responses, whereas reconversion of Pfr to Pr cancels the induction of those responses. Pfr controls the expression of a number of nuclear genes including those encoding the small subunit of ribulose-bisphosphate carboxylase, chlorophyll A/B binding protein, protochlorophyllide reductase, rRNA, etc. It also controls the expression of its own gene(s) in a negative feedback fashion. The protein is Phytochrome E (PHYE) of Arabidopsis thaliana (Mouse-ear cress).